The following is a 331-amino-acid chain: Probable zinc-binding oxidoreductase, mitochondrial (331 aa).

Residues Met1 to Pro29 show a composition bias toward polar residues. The segment at Met1–Asn34 is disordered.

This sequence belongs to the zinc-containing alcohol dehydrogenase family. Quinone oxidoreductase subfamily.

The protein resides in the mitochondrion. In Arthroderma benhamiae (strain ATCC MYA-4681 / CBS 112371) (Trichophyton mentagrophytes), this protein is Probable zinc-binding oxidoreductase, mitochondrial.